Consider the following 767-residue polypeptide: Start control protein cdc10 (767 aa).

A disordered region spans residues 17–44 (FSYQKRPEDEPSQPLSNRNINKLNDSST). Residues 29–44 (QPLSNRNINKLNDSST) are compositionally biased toward polar residues. An HTH APSES-type domain is found at 66–173 (ELYAVECSGM…FNLDLFPKFS (108 aa)). The segment at residues 98–119 (ISQILRLAGTSSSENAKELDDI) is a DNA-binding region (H-T-H motif). The interval 189 to 230 (TSSFNTRSPLRNHNFSNPSKSSKNGVHTINNMQSSPSPSSSF) is disordered. Polar residues predominate over residues 192-221 (FNTRSPLRNHNFSNPSKSSKNGVHTINNMQ). Serine 252 is modified (phosphoserine). A Nuclear localization signal motif is present at residues 261-264 (KRHR). ANK repeat units follow at residues 356–385 (LGHAALHWAAAVAKMPLLQALIHKGANPLR) and 483–512 (NGDTALNIAARIGNKNIVEVLMQAGASAYI). The interval 542 to 562 (VSLMSENLSSKEKTAVPPRQK) is disordered.

In terms of assembly, DSC1 contains cdc10 and sct1/res1. Interacts with pol5.

Its subcellular location is the nucleus. Major component of the cell cycle transcription factor complex MBF (MCB binding factor, also known as DSC1), that controls G1-S phase specific gene expression. Involved in the control of rRNA production, via interaction with pol5. May be involved in the transcriptional regulation of the cdc22 and cdt1 genes. In fission yeast, two genes, cdc10 and cdc2, are required for the cell cycle control called start, the point early in the G1 phase at which cells become committed to the mitotic cycle. This chain is Start control protein cdc10 (cdc10), found in Schizosaccharomyces pombe (strain 972 / ATCC 24843) (Fission yeast).